The primary structure comprises 351 residues: Heat-inducible transcription repressor HrcA (351 aa).

This sequence belongs to the HrcA family.

In terms of biological role, negative regulator of class I heat shock genes (grpE-dnaK-dnaJ and groELS operons). Prevents heat-shock induction of these operons. This Mycoplasma pneumoniae (strain ATCC 29342 / M129 / Subtype 1) (Mycoplasmoides pneumoniae) protein is Heat-inducible transcription repressor HrcA.